The sequence spans 194 residues: dITP/XTP pyrophosphatase (194 aa).

Serine 11 to lysine 16 is a substrate binding site. Residue aspartate 70 is the Proton acceptor of the active site. A Mg(2+)-binding site is contributed by aspartate 70. Substrate contacts are provided by residues serine 71, phenylalanine 149 to aspartate 152, lysine 172, and histidine 177 to arginine 178.

This sequence belongs to the HAM1 NTPase family. As to quaternary structure, homodimer. It depends on Mg(2+) as a cofactor.

It carries out the reaction XTP + H2O = XMP + diphosphate + H(+). The enzyme catalyses dITP + H2O = dIMP + diphosphate + H(+). The catalysed reaction is ITP + H2O = IMP + diphosphate + H(+). In terms of biological role, pyrophosphatase that catalyzes the hydrolysis of nucleoside triphosphates to their monophosphate derivatives, with a high preference for the non-canonical purine nucleotides XTP (xanthosine triphosphate), dITP (deoxyinosine triphosphate) and ITP. Seems to function as a house-cleaning enzyme that removes non-canonical purine nucleotides from the nucleotide pool, thus preventing their incorporation into DNA/RNA and avoiding chromosomal lesions. The protein is dITP/XTP pyrophosphatase of Thermosynechococcus vestitus (strain NIES-2133 / IAM M-273 / BP-1).